Reading from the N-terminus, the 165-residue chain is Large ribosomal subunit protein uL11 (165 aa).

It belongs to the universal ribosomal protein uL11 family.

Functionally, binds directly to 26S ribosomal RNA. The sequence is that of Large ribosomal subunit protein uL11 (rpl-12) from Caenorhabditis briggsae.